We begin with the raw amino-acid sequence, 316 residues long: L-lactate dehydrogenase (316 aa).

NAD(+)-binding positions include Val15, Asp37, Lys42, Tyr68, and 82 to 83 (GL). Substrate is bound by residues Gln85, Arg91, and 123–126 (NPVD). NAD(+)-binding positions include 121–123 (ASN) and Thr146. 151–154 (DTSR) is a substrate binding site. Residues Arg156 and His171 each contribute to the beta-D-fructose 1,6-bisphosphate site. The active-site Proton acceptor is His178. Tyr222 carries the post-translational modification Phosphotyrosine. Residue Thr231 coordinates substrate.

It belongs to the LDH/MDH superfamily. LDH family. As to quaternary structure, homotetramer.

It localises to the cytoplasm. The catalysed reaction is (S)-lactate + NAD(+) = pyruvate + NADH + H(+). Its pathway is fermentation; pyruvate fermentation to lactate; (S)-lactate from pyruvate: step 1/1. With respect to regulation, allosterically activated by fructose 1,6-bisphosphate (FBP). Catalyzes the conversion of lactate to pyruvate. In Borrelia garinii subsp. bavariensis (strain ATCC BAA-2496 / DSM 23469 / PBi) (Borreliella bavariensis), this protein is L-lactate dehydrogenase.